The sequence spans 187 residues: Large ribosomal subunit protein uL6 (187 aa).

Belongs to the universal ribosomal protein uL6 family. Part of the 50S ribosomal subunit.

Its function is as follows. This protein binds to the 23S rRNA, and is important in its secondary structure. It is located near the subunit interface in the base of the L7/L12 stalk, and near the tRNA binding site of the peptidyltransferase center. The polypeptide is Large ribosomal subunit protein uL6 (Roseiflexus sp. (strain RS-1)).